Consider the following 213-residue polypeptide: Large ribosomal subunit protein uL4 (213 aa).

Residues 41-75 form a disordered region; the sequence is GTASTKTRAEVSRSGKKMYSQKGTGNARHGDRSVP.

The protein belongs to the universal ribosomal protein uL4 family. In terms of assembly, part of the 50S ribosomal subunit.

One of the primary rRNA binding proteins, this protein initially binds near the 5'-end of the 23S rRNA. It is important during the early stages of 50S assembly. It makes multiple contacts with different domains of the 23S rRNA in the assembled 50S subunit and ribosome. Functionally, forms part of the polypeptide exit tunnel. In Deinococcus geothermalis (strain DSM 11300 / CIP 105573 / AG-3a), this protein is Large ribosomal subunit protein uL4.